The chain runs to 355 residues: MTAKTRRLMVMAGGTGGHVFPGLAVAHHLMAQGWQVRWLGTANRMEADLVPQHGIDIDFIRISGLRGKGLKAQLLAPVRIWRALRQARRIMRAWRPDVVLGMGGYVSGPGGLAAWSCGIPVVLHEQNGIAGLTNRGLAKISRKVLQAFPGAFPHADVVGNPVRDAVLALPAPEARFRDRTGPIRVLIIGGSQGARVLNQTMPAVAARLAGILTLWHQVGKGALEEVNRAYAANGETQHKVVEFIDDMAAAYAWADAVVCRAGALTVSEIAAAGLPALFVPFMHKDRQQYWNARLLEQACAAKIIEQPAFSVERVSDVLAGWDRPTLLTMAQRARAAAIPDATERVAREVAAAVRA.

UDP-N-acetyl-alpha-D-glucosamine-binding positions include 15-17, Asn-127, Arg-163, Ser-191, Ile-244, 263-268, and Gln-288; these read TGG and ALTVSE.

Belongs to the glycosyltransferase 28 family. MurG subfamily.

Its subcellular location is the cell inner membrane. The catalysed reaction is di-trans,octa-cis-undecaprenyl diphospho-N-acetyl-alpha-D-muramoyl-L-alanyl-D-glutamyl-meso-2,6-diaminopimeloyl-D-alanyl-D-alanine + UDP-N-acetyl-alpha-D-glucosamine = di-trans,octa-cis-undecaprenyl diphospho-[N-acetyl-alpha-D-glucosaminyl-(1-&gt;4)]-N-acetyl-alpha-D-muramoyl-L-alanyl-D-glutamyl-meso-2,6-diaminopimeloyl-D-alanyl-D-alanine + UDP + H(+). The protein operates within cell wall biogenesis; peptidoglycan biosynthesis. In terms of biological role, cell wall formation. Catalyzes the transfer of a GlcNAc subunit on undecaprenyl-pyrophosphoryl-MurNAc-pentapeptide (lipid intermediate I) to form undecaprenyl-pyrophosphoryl-MurNAc-(pentapeptide)GlcNAc (lipid intermediate II). This chain is UDP-N-acetylglucosamine--N-acetylmuramyl-(pentapeptide) pyrophosphoryl-undecaprenol N-acetylglucosamine transferase, found in Sodalis glossinidius (strain morsitans).